Here is a 452-residue protein sequence, read N- to C-terminus: Bifunctional protein GlmU (452 aa).

A pyrophosphorylase region spans residues 1 to 226 (MSLAVVILAA…GWEVDGVNDR (226 aa)). Residues 8–11 (LAAG), Lys-22, Gln-73, 78–79 (GT), 99–101 (YGD), Gly-136, Glu-151, Asn-166, and Asn-224 contribute to the UDP-N-acetyl-alpha-D-glucosamine site. Asp-101 provides a ligand contact to Mg(2+). Asn-224 provides a ligand contact to Mg(2+). A linker region spans residues 227–247 (VQLARLERIYQQAQAETLMRD). The segment at 248–452 (GVTLLDPSRL…VANWQRPKKG (205 aa)) is N-acetyltransferase. UDP-N-acetyl-alpha-D-glucosamine is bound by residues Arg-330 and Lys-348. The active-site Proton acceptor is His-360. Tyr-363 and Asn-374 together coordinate UDP-N-acetyl-alpha-D-glucosamine. Acetyl-CoA-binding positions include Ala-377, 383–384 (NY), Ser-402, Ala-420, and Arg-437.

In the N-terminal section; belongs to the N-acetylglucosamine-1-phosphate uridyltransferase family. It in the C-terminal section; belongs to the transferase hexapeptide repeat family. Homotrimer. Requires Mg(2+) as cofactor.

The protein resides in the cytoplasm. It carries out the reaction alpha-D-glucosamine 1-phosphate + acetyl-CoA = N-acetyl-alpha-D-glucosamine 1-phosphate + CoA + H(+). The enzyme catalyses N-acetyl-alpha-D-glucosamine 1-phosphate + UTP + H(+) = UDP-N-acetyl-alpha-D-glucosamine + diphosphate. It participates in nucleotide-sugar biosynthesis; UDP-N-acetyl-alpha-D-glucosamine biosynthesis; N-acetyl-alpha-D-glucosamine 1-phosphate from alpha-D-glucosamine 6-phosphate (route II): step 2/2. Its pathway is nucleotide-sugar biosynthesis; UDP-N-acetyl-alpha-D-glucosamine biosynthesis; UDP-N-acetyl-alpha-D-glucosamine from N-acetyl-alpha-D-glucosamine 1-phosphate: step 1/1. The protein operates within bacterial outer membrane biogenesis; LPS lipid A biosynthesis. In terms of biological role, catalyzes the last two sequential reactions in the de novo biosynthetic pathway for UDP-N-acetylglucosamine (UDP-GlcNAc). The C-terminal domain catalyzes the transfer of acetyl group from acetyl coenzyme A to glucosamine-1-phosphate (GlcN-1-P) to produce N-acetylglucosamine-1-phosphate (GlcNAc-1-P), which is converted into UDP-GlcNAc by the transfer of uridine 5-monophosphate (from uridine 5-triphosphate), a reaction catalyzed by the N-terminal domain. This Alcanivorax borkumensis (strain ATCC 700651 / DSM 11573 / NCIMB 13689 / SK2) protein is Bifunctional protein GlmU.